Reading from the N-terminus, the 490-residue chain is ATP synthase subunit beta, chloroplastic (490 aa).

An ATP-binding site is contributed by 170-177 (GGXGVGKT).

It belongs to the ATPase alpha/beta chains family. F-type ATPases have 2 components, CF(1) - the catalytic core - and CF(0) - the membrane proton channel. CF(1) has five subunits: alpha(3), beta(3), gamma(1), delta(1), epsilon(1). CF(0) has four main subunits: a(1), b(1), b'(1) and c(9-12).

The protein resides in the plastid. Its subcellular location is the chloroplast thylakoid membrane. The catalysed reaction is ATP + H2O + 4 H(+)(in) = ADP + phosphate + 5 H(+)(out). In terms of biological role, produces ATP from ADP in the presence of a proton gradient across the membrane. The catalytic sites are hosted primarily by the beta subunits. The polypeptide is ATP synthase subunit beta, chloroplastic (Ipomoea coccinea (Scarlet morning-glory)).